The following is a 179-amino-acid chain: MARPSPLCLLLLLTLLPPIVPSNSLLTEPPFRWRFYLHETWTQGNWLSTVTLATVDCQPHGCQAQVTFNFTSFKSVLRGWSNPTICFVYDQTHSNCRDYWADTNGGCPYAYCHMHVTQLDTAKKLQHTYRLTSDGRTTYFLTIPDPWDSRWVSRVTGRLYQWPTDSYPVSKLRIFRTYV.

Positions 1 to 22 are cleaved as a signal peptide; that stretch reads MARPSPLCLLLLLTLLPPIVPS. The truncated surface protein stretch occupies residues 23 to 179; that stretch reads NSLLTEPPFR…SKLRIFRTYV (157 aa). N-linked (GlcNAc...) asparagine glycosylation is present at Asn-69.

It belongs to the gamma type-C retroviral envelope protein family. HERV class-I F(c)1 env subfamily.

The protein localises to the virion. Functionally, retroviral envelope proteins mediate receptor recognition and membrane fusion during early infection. Endogenous envelope proteins may have kept, lost or modified their original function during evolution. In Gorilla gorilla gorilla (Western lowland gorilla), this protein is Putative endogenous retrovirus group FC1 Env polyprotein (ERVFC1).